Here is an 871-residue protein sequence, read N- to C-terminus: Alanine--tRNA ligase (871 aa).

Positions 561, 565, 665, and 669 each coordinate Zn(2+).

It belongs to the class-II aminoacyl-tRNA synthetase family. Requires Zn(2+) as cofactor.

Its subcellular location is the cytoplasm. It carries out the reaction tRNA(Ala) + L-alanine + ATP = L-alanyl-tRNA(Ala) + AMP + diphosphate. In terms of biological role, catalyzes the attachment of alanine to tRNA(Ala) in a two-step reaction: alanine is first activated by ATP to form Ala-AMP and then transferred to the acceptor end of tRNA(Ala). Also edits incorrectly charged Ser-tRNA(Ala) and Gly-tRNA(Ala) via its editing domain. This chain is Alanine--tRNA ligase, found in Dehalococcoides mccartyi (strain ATCC BAA-2100 / JCM 16839 / KCTC 5957 / BAV1).